The sequence spans 214 residues: Octanoyltransferase (214 aa).

The BPL/LPL catalytic domain maps to 32 to 207 (EDTLDEIWLV…NLLALLNHPP (176 aa)). Substrate is bound by residues 71–78 (RGGQVTYH), 138–140 (SLG), and 151–153 (GLA). Catalysis depends on cysteine 169, which acts as the Acyl-thioester intermediate.

The protein belongs to the LipB family.

The protein localises to the cytoplasm. It carries out the reaction octanoyl-[ACP] + L-lysyl-[protein] = N(6)-octanoyl-L-lysyl-[protein] + holo-[ACP] + H(+). It functions in the pathway protein modification; protein lipoylation via endogenous pathway; protein N(6)-(lipoyl)lysine from octanoyl-[acyl-carrier-protein]: step 1/2. Catalyzes the transfer of endogenously produced octanoic acid from octanoyl-acyl-carrier-protein onto the lipoyl domains of lipoate-dependent enzymes. Lipoyl-ACP can also act as a substrate although octanoyl-ACP is likely to be the physiological substrate. The sequence is that of Octanoyltransferase from Klebsiella pneumoniae (strain 342).